The following is a 146-amino-acid chain: HTH-type transcriptional regulator FarR (146 aa).

One can recognise an HTH marR-type domain in the interval 7–139 (HASINIGLIQ…LKDLLAELAK (133 aa)). The segment at residues 53 to 76 (FQDLANQACILRPSLTGILTRLEK) is a DNA-binding region (H-T-H motif).

Its activity is regulated as follows. Repressor activity requires the presence of the Integration Host Factor (IHF), which binds to sequences located between FarR binding sites A and C. IHF binding to the promoter region stabilizes the binding of FarR to its binding sites A and C and as a consequence, enhances repression of the farAB operon. Its function is as follows. Negatively controls expression of the farAB operon by binding directly to the farAB promoter region. Binds to three sites (sites A, B and C) within the DNA sequence upstream of farA. Also represses its own expression. This Neisseria gonorrhoeae protein is HTH-type transcriptional regulator FarR.